The following is a 368-amino-acid chain: MNALLEQKEQQERLREAAALGDIREVQKLVESGVDVNSQNEVNGWTCLHWACKRNHGQVVSYLLKSGADKEILTTKGEMPVQLTSRREIRKIMGVEEEDDDDDDDDNLPQLKKESELPFVPNYLANPAFPFIYTPTAEDSAQMQNGGPSTPPASPPADGSPPLLPPGEPPLLGTFPRDHTSLALVQNGDVSAPSAILRTPESTKPGPVCQPPVSQSRSLFSSVPSKPPMSLEPQNGTYAGPAPAFQPFFFTGAFPFNMQELVLKVRIQNPSLRENDFIEIELDRQELTYQELLRVCCCELGVNPDQVEKIRKLPNTLLRKDKDVARLQDFQELELVLMISENNFLFRNAASTLTERPCYNRRASKLTY.

The residue at position 1 (Met1) is an N-acetylmethionine. ANK repeat units follow at residues 9 to 38 (EQQE…DVNS) and 43 to 72 (NGWT…DKEI). Disordered regions lie at residues 93-115 (MGVE…KKES), 139-176 (DSAQ…GTFP), and 196-238 (ILRT…NGTY). Residues 95 to 107 (VEEEDDDDDDDDN) are compositionally biased toward acidic residues. Residues 149–169 (STPPASPPADGSPPLLPPGEP) show a composition bias toward pro residues. Positions 212 to 224 (PVSQSRSLFSSVP) are enriched in polar residues.

In Homo sapiens (Human), this protein is Ankyrin repeat domain-containing protein 40 (ANKRD40).